A 133-amino-acid chain; its full sequence is Large-conductance mechanosensitive channel (133 aa).

Transmembrane regions (helical) follow at residues 10 to 30 (FAMK…TAFG) and 76 to 96 (GNFI…FCVI).

This sequence belongs to the MscL family. As to quaternary structure, homopentamer.

It is found in the cell inner membrane. In terms of biological role, channel that opens in response to stretch forces in the membrane lipid bilayer. May participate in the regulation of osmotic pressure changes within the cell. The polypeptide is Large-conductance mechanosensitive channel (Campylobacter curvus (strain 525.92)).